The following is a 515-amino-acid chain: Maturase K (515 aa).

Belongs to the intron maturase 2 family. MatK subfamily.

It is found in the plastid. Its subcellular location is the chloroplast. Usually encoded in the trnK tRNA gene intron. Probably assists in splicing its own and other chloroplast group II introns. This chain is Maturase K, found in Cedrus deodara (Deodar cedar).